The following is a 290-amino-acid chain: Formamidopyrimidine-DNA glycosylase (290 aa).

P2 serves as the catalytic Schiff-base intermediate with DNA. The Proton donor role is filled by E3. The active-site Proton donor; for beta-elimination activity is K58. Positions 98, 126, and 171 each coordinate DNA. The FPG-type zinc finger occupies 256–290; that stretch reads FVYDRAGLPCRVCATPVRQIVQGQRSTFYCPKCQH. R280 serves as the catalytic Proton donor; for delta-elimination activity.

The protein belongs to the FPG family. Monomer. The cofactor is Zn(2+).

It carries out the reaction Hydrolysis of DNA containing ring-opened 7-methylguanine residues, releasing 2,6-diamino-4-hydroxy-5-(N-methyl)formamidopyrimidine.. It catalyses the reaction 2'-deoxyribonucleotide-(2'-deoxyribose 5'-phosphate)-2'-deoxyribonucleotide-DNA = a 3'-end 2'-deoxyribonucleotide-(2,3-dehydro-2,3-deoxyribose 5'-phosphate)-DNA + a 5'-end 5'-phospho-2'-deoxyribonucleoside-DNA + H(+). Its function is as follows. Involved in base excision repair of DNA damaged by oxidation or by mutagenic agents. Acts as a DNA glycosylase that recognizes and removes damaged bases. Has a preference for oxidized purines, such as 7,8-dihydro-8-oxoguanine (8-oxoG). Has AP (apurinic/apyrimidinic) lyase activity and introduces nicks in the DNA strand. Cleaves the DNA backbone by beta-delta elimination to generate a single-strand break at the site of the removed base with both 3'- and 5'-phosphates. The sequence is that of Formamidopyrimidine-DNA glycosylase from Cupriavidus taiwanensis (strain DSM 17343 / BCRC 17206 / CCUG 44338 / CIP 107171 / LMG 19424 / R1) (Ralstonia taiwanensis (strain LMG 19424)).